Reading from the N-terminus, the 318-residue chain is L-lactate dehydrogenase (318 aa).

NAD(+) is bound by residues valine 18, aspartate 39, lysine 44, tyrosine 69, and 83–84 (GA). Positions 86 and 92 each coordinate substrate. NAD(+) is bound by residues serine 105, 122–124 (VSN), and serine 147. Residue 124–127 (NPVD) coordinates substrate. A substrate-binding site is contributed by 152-155 (DTSR). Catalysis depends on histidine 179, which acts as the Proton acceptor. Tyrosine 225 carries the post-translational modification Phosphotyrosine. Residue threonine 234 participates in substrate binding.

This sequence belongs to the LDH/MDH superfamily. LDH family. In terms of assembly, homotetramer.

It is found in the cytoplasm. The catalysed reaction is (S)-lactate + NAD(+) = pyruvate + NADH + H(+). The protein operates within fermentation; pyruvate fermentation to lactate; (S)-lactate from pyruvate: step 1/1. Functionally, catalyzes the conversion of lactate to pyruvate. This chain is L-lactate dehydrogenase, found in Clostridium botulinum (strain ATCC 19397 / Type A).